Consider the following 394-residue polypeptide: Phosphoglycerate kinase (394 aa).

Substrate-binding positions include 21 to 23 (DLN), R36, 60 to 63 (HLGN), R114, and R147. Residues K198, E315, and 341–344 (GGET) each bind ATP.

Belongs to the phosphoglycerate kinase family. Monomer.

It is found in the cytoplasm. It catalyses the reaction (2R)-3-phosphoglycerate + ATP = (2R)-3-phospho-glyceroyl phosphate + ADP. Its pathway is carbohydrate degradation; glycolysis; pyruvate from D-glyceraldehyde 3-phosphate: step 2/5. The polypeptide is Phosphoglycerate kinase (Wigglesworthia glossinidia brevipalpis).